The primary structure comprises 241 residues: MRIPLLAPDNYAFPDPAYALAWCDGLVGVSGDLDAGRLLEAYQNGVFPWFLRDGWFFWYAVGPRAVIVPERLHVPCSLAKTLRNGSYRVAVNGCFAEVVAHCAAAARPNQDGTWIAPEFQTAYLKLHEMGYAHSFECHYPDENGKTRLAGGFYGVQIGRVFYGESMFALQPDASKIAFACAVPFLADLGVELIDCQQDTEHMRRFGSELLPFADFAERLRMLNAVPLKEEIGRREVACRGL.

This sequence belongs to the L/F-transferase family.

The protein resides in the cytoplasm. It carries out the reaction N-terminal L-lysyl-[protein] + L-leucyl-tRNA(Leu) = N-terminal L-leucyl-L-lysyl-[protein] + tRNA(Leu) + H(+). The catalysed reaction is N-terminal L-arginyl-[protein] + L-leucyl-tRNA(Leu) = N-terminal L-leucyl-L-arginyl-[protein] + tRNA(Leu) + H(+). It catalyses the reaction L-phenylalanyl-tRNA(Phe) + an N-terminal L-alpha-aminoacyl-[protein] = an N-terminal L-phenylalanyl-L-alpha-aminoacyl-[protein] + tRNA(Phe). Its function is as follows. Functions in the N-end rule pathway of protein degradation where it conjugates Leu, Phe and, less efficiently, Met from aminoacyl-tRNAs to the N-termini of proteins containing an N-terminal arginine or lysine. In Neisseria meningitidis serogroup A / serotype 4A (strain DSM 15465 / Z2491), this protein is Leucyl/phenylalanyl-tRNA--protein transferase.